The following is a 100-amino-acid chain: Ubiquitin-related modifier 1 (100 aa).

At Gly100 the chain carries 1-thioglycine. Gly100 participates in a covalent cross-link: Glycyl lysine isopeptide (Gly-Lys) (interchain with K-? in acceptor proteins).

The protein belongs to the URM1 family. C-terminal thiocarboxylation occurs in 2 steps, it is first acyl-adenylated (-COAMP) via the hesA/moeB/thiF part of UBA4, then thiocarboxylated (-COSH) via the rhodanese domain of UBA4.

It localises to the cytoplasm. The protein operates within tRNA modification; 5-methoxycarbonylmethyl-2-thiouridine-tRNA biosynthesis. Its function is as follows. Acts as a sulfur carrier required for 2-thiolation of mcm(5)S(2)U at tRNA wobble positions of cytosolic tRNA(Lys), tRNA(Glu) and tRNA(Gln). Serves as sulfur donor in tRNA 2-thiolation reaction by being thiocarboxylated (-COSH) at its C-terminus by the MOCS3 homolog UBA4. The sulfur is then transferred to tRNA to form 2-thiolation of mcm(5)S(2)U. Prior mcm(5) tRNA modification by the elongator complex is required for 2-thiolation. Also acts as a ubiquitin-like protein (UBL) that is covalently conjugated via an isopeptide bond to lysine residues of target proteins such as AHP1. The thiocarboxylated form serves as substrate for conjugation and oxidative stress specifically induces the formation of UBL-protein conjugates. The sequence is that of Ubiquitin-related modifier 1 from Eremothecium gossypii (strain ATCC 10895 / CBS 109.51 / FGSC 9923 / NRRL Y-1056) (Yeast).